Here is a 470-residue protein sequence, read N- to C-terminus: 3-isopropylmalate dehydratase large subunit (470 aa).

Positions 349, 409, and 412 each coordinate [4Fe-4S] cluster.

Belongs to the aconitase/IPM isomerase family. LeuC type 1 subfamily. Heterodimer of LeuC and LeuD. [4Fe-4S] cluster serves as cofactor.

It catalyses the reaction (2R,3S)-3-isopropylmalate = (2S)-2-isopropylmalate. Its pathway is amino-acid biosynthesis; L-leucine biosynthesis; L-leucine from 3-methyl-2-oxobutanoate: step 2/4. Functionally, catalyzes the isomerization between 2-isopropylmalate and 3-isopropylmalate, via the formation of 2-isopropylmaleate. The polypeptide is 3-isopropylmalate dehydratase large subunit (Koribacter versatilis (strain Ellin345)).